The chain runs to 331 residues: MKKPVVIALAVAALAAVLAGGTWWYQSRQDNGLTLYGNVDIRTVNMSFRVGGRLASLAVDEGDAITSGQVLGVLDKAPYENALMQAKAGVSVAQAQYDLMLAGYRDEEIAQAAAAVKQAQAAFDYAQNFYQRQQGLWKSRTISANDLENARSSRDQAQAQLKSAQDKLSQYRTGNRQQDIAQAKASLEQAQAQLAQSELDLQDTTLIAPSDGTLLTRAVEPGSMLNAGSTVLTLSLTRPVWVRAYVDERNLSQAQPGREILLYTDGRPDKPYHGKIGFVSPTAEFTPKTVETPDLRTDLVYRLRIVVTDADDALRQGMPVTLTFSDEARHE.

Positions 1–15 (MKKPVVIALAVAALA) are cleaved as a signal peptide. Positions 142–207 (ISANDLENAR…ELDLQDTTLI (66 aa)) form a coiled coil.

Belongs to the UPF0194 family.

It localises to the periplasm. In Citrobacter koseri (strain ATCC BAA-895 / CDC 4225-83 / SGSC4696), this protein is UPF0194 membrane protein CKO_02332.